A 236-amino-acid chain; its full sequence is Peptidyl-prolyl cis-trans isomerase CYP21-4 (236 aa).

A helical; Signal-anchor for type II membrane protein membrane pass occupies residues 22–42 (ISISTIIVCNLVVAVVILSLV). The interval 52–71 (SRNTIEHETRSQRFEDTNTA) is disordered. Basic and acidic residues predominate over residues 54–67 (NTIEHETRSQRFED). Positions 82-232 (FADINTSKGL…SPIGITGVVL (151 aa)) constitute a PPIase cyclophilin-type domain. A glycan (N-linked (GlcNAc...) asparagine) is linked at asparagine 86.

Belongs to the cyclophilin-type PPIase family. Ubiquitous.

It is found in the membrane. It carries out the reaction [protein]-peptidylproline (omega=180) = [protein]-peptidylproline (omega=0). Its function is as follows. PPIases accelerate the folding of proteins. It catalyzes the cis-trans isomerization of proline imidic peptide bonds in oligopeptides. This chain is Peptidyl-prolyl cis-trans isomerase CYP21-4 (CYP21-4), found in Arabidopsis thaliana (Mouse-ear cress).